The chain runs to 758 residues: MTILNHTLGFPRVGLKRELKKAQESYWAGNSTQEELLNVGRELRARHWQQQQQAGVDLVPVGDFAWYDHVLTTSLLLGNVPERHQNADGSIDIDTLFRIGRGRAPTGKPAAAAEMTKWFNTNYHYMVPEFQQGQQFKLGWTQLLDEVDEALALGHKIKPVLLGPITYLWLGKVKGEQFDRLSLLNDILPVYQQVLAELAKRGIEWVQIDEPALVLELPQEWLDAYQPAYQALQGQVKLLLTTYFDSIGHNIDTIRALPVQGLHVDVVAGHDDLAVLHKNLPKEWLLSLGVINGRNVWRADLSSWFERLQPLVNSRPLWLGSSCSLLHSPIDLNEETRLDAEVKSWFAFALQKCAELALLTQALNAPNDAKLAELAAYSAPIRARRSSSRVHNAQVEQRLAAITSQDIERQLPYEARAETQRKRFNLPAWPTTTIGSFPQTTEIRGLRLDFKQGRLDGKNYRTGISEHIKQAIAEQERLGLDVLVHGEAERNDMVEYFGEHLDGFVFTQNGWVQSYGSRCVKPPVIIGDISRPEAITVEWAKYAQSLTEKPVKGMLTGPVTILCWSFPREDVSRETIAKQIALALRDEVEDLEKAGIGIIQIDEPALREGLPLRRADWQAYLQWAVDAFKLNAAVAQNDTQIHTHMCYCEFNDIMDSIAALDADVITIETSRSDMELLESFEDFAYPNEIGPGVYDIHSPNVPSVEWIEALLRKAAQRIPAERLWVNPDCGLKTRGWPETRQALANMVLAAQRLREEQI.

5-methyltetrahydropteroyltri-L-glutamate is bound by residues 17–20 and Lys-117; that span reads RELK. Residues 434 to 436 and Glu-487 each bind L-homocysteine; that span reads IGS. Residues 434 to 436 and Glu-487 each bind L-methionine; that span reads IGS. Residues 518–519 and Trp-564 contribute to the 5-methyltetrahydropteroyltri-L-glutamate site; that span reads RC. Asp-602 contacts L-homocysteine. Asp-602 serves as a coordination point for L-methionine. Glu-608 contributes to the 5-methyltetrahydropteroyltri-L-glutamate binding site. Zn(2+) contacts are provided by His-644, Cys-646, and Glu-668. The Proton donor role is filled by His-697. A Zn(2+)-binding site is contributed by Cys-729.

Belongs to the vitamin-B12 independent methionine synthase family. Requires Zn(2+) as cofactor.

It carries out the reaction 5-methyltetrahydropteroyltri-L-glutamate + L-homocysteine = tetrahydropteroyltri-L-glutamate + L-methionine. It participates in amino-acid biosynthesis; L-methionine biosynthesis via de novo pathway; L-methionine from L-homocysteine (MetE route): step 1/1. In terms of biological role, catalyzes the transfer of a methyl group from 5-methyltetrahydrofolate to homocysteine resulting in methionine formation. This is 5-methyltetrahydropteroyltriglutamate--homocysteine methyltransferase from Yersinia pseudotuberculosis serotype O:1b (strain IP 31758).